The following is a 113-amino-acid chain: UPF0482 protein YnfB (113 aa).

Positions 1–28 (MKITLSKRIGLLAFLLPCALALSTTVHA) are cleaved as a signal peptide.

The protein belongs to the UPF0482 family.

This chain is UPF0482 protein YnfB, found in Shigella flexneri serotype 5b (strain 8401).